A 265-amino-acid polypeptide reads, in one-letter code: Beta-lactamase SHV-4 (265 aa).

Ser45 acts as the Acyl-ester intermediate in catalysis. Cys52 and Cys98 form a disulfide bridge. The active-site Proton acceptor is the Glu143. 209-211 lines the substrate pocket; sequence KTG.

The protein belongs to the class-A beta-lactamase family.

It catalyses the reaction a beta-lactam + H2O = a substituted beta-amino acid. Its function is as follows. SHV enzymes hydrolyze broad spectrum cephalosporins notably cefotaxime and ceftazidime. SHV-4 causes particularly high levels of resistance to aztreonam and ceftazidime. This Klebsiella pneumoniae protein is Beta-lactamase SHV-4 (bla).